Here is a 73-residue protein sequence, read N- to C-terminus: MAIFRRKNSPIKKDDFIDYKDVELLSKFLTEQGKILPRRITGLTMKQQSRLTKAVKRARILSLLPFINRDMIL.

Belongs to the bacterial ribosomal protein bS18 family. In terms of assembly, part of the 30S ribosomal subunit.

The protein localises to the plastid. It is found in the chloroplast. The polypeptide is Small ribosomal subunit protein bS18c (rps18) (Guillardia theta (Cryptophyte)).